The sequence spans 92 residues: Small ribosomal subunit protein uS19 (92 aa).

This sequence belongs to the universal ribosomal protein uS19 family.

Functionally, protein S19 forms a complex with S13 that binds strongly to the 16S ribosomal RNA. The polypeptide is Small ribosomal subunit protein uS19 (Baumannia cicadellinicola subsp. Homalodisca coagulata).